Here is a 439-residue protein sequence, read N- to C-terminus: 3-phosphoshikimate 1-carboxyvinyltransferase (439 aa).

3-phosphoshikimate-binding residues include K21, S22, and R26. Residue K21 participates in phosphoenolpyruvate binding. Residues G94 and R122 each contribute to the phosphoenolpyruvate site. 3-phosphoshikimate is bound by residues S167, Q169, D320, and K347. Phosphoenolpyruvate is bound at residue Q169. The active-site Proton acceptor is the D320. Residues R351 and R395 each coordinate phosphoenolpyruvate.

It belongs to the EPSP synthase family. In terms of assembly, monomer.

It is found in the cytoplasm. The catalysed reaction is 3-phosphoshikimate + phosphoenolpyruvate = 5-O-(1-carboxyvinyl)-3-phosphoshikimate + phosphate. It functions in the pathway metabolic intermediate biosynthesis; chorismate biosynthesis; chorismate from D-erythrose 4-phosphate and phosphoenolpyruvate: step 6/7. Functionally, catalyzes the transfer of the enolpyruvyl moiety of phosphoenolpyruvate (PEP) to the 5-hydroxyl of shikimate-3-phosphate (S3P) to produce enolpyruvyl shikimate-3-phosphate and inorganic phosphate. In Hyphomonas neptunium (strain ATCC 15444), this protein is 3-phosphoshikimate 1-carboxyvinyltransferase.